Reading from the N-terminus, the 257-residue chain is Putative hydro-lyase YcsI (257 aa).

Belongs to the D-glutamate cyclase family.

The protein is Putative hydro-lyase YcsI (ycsI) of Bacillus subtilis (strain 168).